The following is a 562-amino-acid chain: Putative transport protein ETA_21820 (562 aa).

Transmembrane regions (helical) follow at residues 8 to 28 (LLIG…LCLG), 32 to 52 (LGSV…LLGQ), 66 to 86 (FMLF…SIFF), 94 to 114 (MLAI…GKLF), and 158 to 178 (HLSL…IFGA). RCK C-terminal domains are found at residues 202 to 288 (LDPD…SFRN) and 290 to 373 (KEVF…RIGF). Transmembrane regions (helical) follow at residues 383-403 (LLAF…TFQF), 406-426 (FNFG…LGFL), 440-460 (ALTM…GLSA), 473-493 (LLML…CFLF), 503-523 (ALLF…EIIS), and 540-560 (AIAN…WPIL).

Belongs to the AAE transporter (TC 2.A.81) family. YbjL subfamily.

The protein localises to the cell membrane. The chain is Putative transport protein ETA_21820 from Erwinia tasmaniensis (strain DSM 17950 / CFBP 7177 / CIP 109463 / NCPPB 4357 / Et1/99).